We begin with the raw amino-acid sequence, 199 residues long: N-(5'-phosphoribosyl)anthranilate isomerase (199 aa).

Belongs to the TrpF family.

The enzyme catalyses N-(5-phospho-beta-D-ribosyl)anthranilate = 1-(2-carboxyphenylamino)-1-deoxy-D-ribulose 5-phosphate. It participates in amino-acid biosynthesis; L-tryptophan biosynthesis; L-tryptophan from chorismate: step 3/5. The chain is N-(5'-phosphoribosyl)anthranilate isomerase from Streptococcus pneumoniae (strain ATCC 700669 / Spain 23F-1).